Reading from the N-terminus, the 98-residue chain is NADH-ubiquinone oxidoreductase chain 4L (98 aa).

The next 3 helical transmembrane spans lie at 1–21, 29–49, and 61–81; these read MSLV…GLLM, SLLC…IMIL, and IILL…LVMV.

This sequence belongs to the complex I subunit 4L family. Core subunit of respiratory chain NADH dehydrogenase (Complex I) which is composed of 45 different subunits.

The protein localises to the mitochondrion inner membrane. It catalyses the reaction a ubiquinone + NADH + 5 H(+)(in) = a ubiquinol + NAD(+) + 4 H(+)(out). Core subunit of the mitochondrial membrane respiratory chain NADH dehydrogenase (Complex I) which catalyzes electron transfer from NADH through the respiratory chain, using ubiquinone as an electron acceptor. Part of the enzyme membrane arm which is embedded in the lipid bilayer and involved in proton translocation. This Mogera wogura (Japanese mole) protein is NADH-ubiquinone oxidoreductase chain 4L (MT-ND4L).